The following is a 357-amino-acid chain: Protein Wnt-8c (357 aa).

A signal peptide spans 1 to 16 (MRGSTFLLLSIVGIYG). An intrachain disulfide couples Cys-55 to Cys-66. N-linked (GlcNAc...) asparagine glycosylation occurs at Asn-104. Disulfide bonds link Cys-105–Cys-113, Cys-115–Cys-133, Cys-181–Cys-195, Cys-183–Cys-190, Cys-260–Cys-298, Cys-276–Cys-291, Cys-313–Cys-328, Cys-315–Cys-325, and Cys-320–Cys-321. Residue Ser-187 is the site of O-palmitoleoyl serine attachment. Asn-263 and Asn-282 each carry an N-linked (GlcNAc...) asparagine glycan. Asn-346 carries N-linked (GlcNAc...) asparagine glycosylation.

This sequence belongs to the Wnt family. Post-translationally, palmitoleoylation is required for efficient binding to frizzled receptors. Depalmitoleoylation leads to Wnt signaling pathway inhibition. Proteolytic processing by tiki1 and tiki2 promotes oxidation and formation of large disulfide-bond oligomers, leading to inactivation of wnt8c. As to expression, cells that form rhombomere 4. Hensen node and the neural plate immediately anterior to it.

The protein resides in the secreted. It localises to the extracellular space. Its subcellular location is the extracellular matrix. Functionally, ligand for members of the frizzled family of seven transmembrane receptors. Probable developmental protein. Is likely to signal over only few cell diameters. May be involved in the regulation of axis formation and in the rhombomere specification. In Gallus gallus (Chicken), this protein is Protein Wnt-8c (WNT8C).